The chain runs to 102 residues: Iron-sulfur cluster assembly protein CyaY (102 aa).

This sequence belongs to the frataxin family.

In terms of biological role, involved in iron-sulfur (Fe-S) cluster assembly. May act as a regulator of Fe-S biogenesis. The sequence is that of Iron-sulfur cluster assembly protein CyaY from Actinobacillus succinogenes (strain ATCC 55618 / DSM 22257 / CCUG 43843 / 130Z).